The chain runs to 231 residues: MITRDFLMNADCKTAFGAIEESLLWSAEQRAASLAATLACRPDEGPVWIFGYGSLMWNPALEFTESCTGTLVGWHRAFCLRLTAGRGTAHQPGRMLALKEGGRTTGVAYRLPEETLEQELTLLWKREMITGCYLPTWCQLDLDDGRTVNAIVFIMDPRHPEYESDTRAQVIAPLIAAASGPLGTNAQYLFSLEQELIKLGMQDDGLNDLLVSVKKLLAENFPDGVLRPGFA.

Substrate is bound at residue 49-54; the sequence is IFGYGS. Glutamate 127 serves as the catalytic Proton acceptor.

This sequence belongs to the gamma-glutamylcyclotransferase family. ChaC subfamily.

It carries out the reaction glutathione = L-cysteinylglycine + 5-oxo-L-proline. Catalyzes the cleavage of glutathione into 5-oxo-L-proline and a Cys-Gly dipeptide. Acts specifically on glutathione, but not on other gamma-glutamyl peptides. The sequence is that of Glutathione-specific gamma-glutamylcyclotransferase from Escherichia coli (strain K12).